The primary structure comprises 458 residues: Phosphomethylpyrimidine synthase (458 aa).

Substrate contacts are provided by residues N80, M109, Y139, H175, 195 to 197 (SRG), 236 to 239 (DSLR), and E275. Position 279 (H279) interacts with Zn(2+). Y302 contacts substrate. H343 is a Zn(2+) binding site. Residues C423, C426, and C431 each coordinate [4Fe-4S] cluster.

It belongs to the ThiC family. [4Fe-4S] cluster serves as cofactor.

The enzyme catalyses 5-amino-1-(5-phospho-beta-D-ribosyl)imidazole + S-adenosyl-L-methionine = 4-amino-2-methyl-5-(phosphooxymethyl)pyrimidine + CO + 5'-deoxyadenosine + formate + L-methionine + 3 H(+). It functions in the pathway cofactor biosynthesis; thiamine diphosphate biosynthesis. Its function is as follows. Catalyzes the synthesis of the hydroxymethylpyrimidine phosphate (HMP-P) moiety of thiamine from aminoimidazole ribotide (AIR) in a radical S-adenosyl-L-methionine (SAM)-dependent reaction. The sequence is that of Phosphomethylpyrimidine synthase from Acaryochloris marina (strain MBIC 11017).